The chain runs to 476 residues: Sulfate adenylyltransferase subunit 1 (476 aa).

In terms of domain architecture, tr-type G spans 24 to 241 (KSLLRFLTCG…EDVDFVQEQE (218 aa)). The segment at 33-40 (GSVDDGKS) is G1. 33–40 (GSVDDGKS) contributes to the GTP binding site. A G2 region spans residues 91–95 (GITID). Residues 112–115 (DTPG) form a G3 region. GTP contacts are provided by residues 112–116 (DTPGH) and 167–170 (NKMD). Positions 167–170 (NKMD) are G4. The G5 stretch occupies residues 205–207 (SAL).

Belongs to the TRAFAC class translation factor GTPase superfamily. Classic translation factor GTPase family. CysN/NodQ subfamily. As to quaternary structure, heterodimer composed of CysD, the smaller subunit, and CysN.

It catalyses the reaction sulfate + ATP + H(+) = adenosine 5'-phosphosulfate + diphosphate. The protein operates within sulfur metabolism; hydrogen sulfide biosynthesis; sulfite from sulfate: step 1/3. In terms of biological role, with CysD forms the ATP sulfurylase (ATPS) that catalyzes the adenylation of sulfate producing adenosine 5'-phosphosulfate (APS) and diphosphate, the first enzymatic step in sulfur assimilation pathway. APS synthesis involves the formation of a high-energy phosphoric-sulfuric acid anhydride bond driven by GTP hydrolysis by CysN coupled to ATP hydrolysis by CysD. This chain is Sulfate adenylyltransferase subunit 1, found in Photobacterium profundum (strain SS9).